A 128-amino-acid chain; its full sequence is Nitrogen fixation nifHD region GlnB-like protein 2 (128 aa).

The protein belongs to the P(II) protein family.

In terms of biological role, could be involved in the regulation of nitrogen fixation. The sequence is that of Nitrogen fixation nifHD region GlnB-like protein 2 (glnBB) from Methanothermococcus thermolithotrophicus (Methanococcus thermolithotrophicus).